The sequence spans 246 residues: tRNA (guanine-N(1)-)-methyltransferase (246 aa).

Residues glycine 113 and 133 to 138 contribute to the S-adenosyl-L-methionine site; that span reads IGDFVM.

The protein belongs to the RNA methyltransferase TrmD family. As to quaternary structure, homodimer.

The protein resides in the cytoplasm. The enzyme catalyses guanosine(37) in tRNA + S-adenosyl-L-methionine = N(1)-methylguanosine(37) in tRNA + S-adenosyl-L-homocysteine + H(+). Its function is as follows. Specifically methylates guanosine-37 in various tRNAs. The sequence is that of tRNA (guanine-N(1)-)-methyltransferase from Vibrio atlanticus (strain LGP32) (Vibrio splendidus (strain Mel32)).